Here is a 274-residue protein sequence, read N- to C-terminus: Elongation factor Ts (274 aa).

The interval 79 to 82 is involved in Mg(2+) ion dislocation from EF-Tu; the sequence is TDFV.

This sequence belongs to the EF-Ts family.

The protein localises to the cytoplasm. Functionally, associates with the EF-Tu.GDP complex and induces the exchange of GDP to GTP. It remains bound to the aminoacyl-tRNA.EF-Tu.GTP complex up to the GTP hydrolysis stage on the ribosome. The sequence is that of Elongation factor Ts from Aster yellows witches'-broom phytoplasma (strain AYWB).